The chain runs to 92 residues: Small ribosomal subunit protein uS19 (92 aa).

This sequence belongs to the universal ribosomal protein uS19 family.

Its function is as follows. Protein S19 forms a complex with S13 that binds strongly to the 16S ribosomal RNA. This chain is Small ribosomal subunit protein uS19, found in Rhodopseudomonas palustris (strain BisB5).